A 510-amino-acid chain; its full sequence is 2-isopropylmalate synthase (510 aa).

The Pyruvate carboxyltransferase domain occupies I4–K266. Mn(2+) is bound by residues D13, H201, H203, and N237. Residues Q390 to S510 are regulatory domain.

It belongs to the alpha-IPM synthase/homocitrate synthase family. LeuA type 1 subfamily. Homodimer. Requires Mn(2+) as cofactor.

It is found in the cytoplasm. It catalyses the reaction 3-methyl-2-oxobutanoate + acetyl-CoA + H2O = (2S)-2-isopropylmalate + CoA + H(+). The protein operates within amino-acid biosynthesis; L-leucine biosynthesis; L-leucine from 3-methyl-2-oxobutanoate: step 1/4. Functionally, catalyzes the condensation of the acetyl group of acetyl-CoA with 3-methyl-2-oxobutanoate (2-ketoisovalerate) to form 3-carboxy-3-hydroxy-4-methylpentanoate (2-isopropylmalate). The sequence is that of 2-isopropylmalate synthase from Staphylococcus carnosus (strain TM300).